The sequence spans 1353 residues: Protein prickle (1353 aa).

3 disordered regions span residues 130-206, 266-292, and 500-540; these read VDDG…TKRN, QEEE…PPLP, and AKYS…SAHA. Over residues 147–165 the composition is skewed to low complexity; sequence TPTATATAGRPLFPLSSSP. Residues 166–178 are compositionally biased toward basic residues; sequence RRSKKLLRSLRAH. The segment covering 179-189 has biased composition (basic and acidic residues); the sequence is VKGESRPEKPA. Over residues 514–532 the composition is skewed to low complexity; sequence LSPALSTPSPPSLLHHPAA. The region spanning 548 to 656 is the PET domain; the sequence is MDMQRQSHSD…NVRQLMSARP (109 aa). LIM zinc-binding domains lie at 655-719, 720-780, and 781-843; these read RPCD…ETLK, PRCS…MFAE, and YCDY…GEPP. Disordered stretches follow at residues 840 to 892, 933 to 962, and 1062 to 1303; these read GEPP…HQAS, HCRS…NMSP, and ADIM…SSSS. The span at 861–892 shows a compositional bias: low complexity; the sequence is TQRVRPQTRITSSHASSSPPMSPQQQQQHQAS. Polar residues-rich tracts occupy residues 952–962 and 1111–1120; these read RASSTSHNMSP and SLNTPLSAHS. Residues 1130-1142 show a composition bias toward low complexity; it reads SILSGASSSSPMS. Positions 1177–1205 are enriched in basic and acidic residues; that stretch reads GDKDRDRDRERDRDRDRDKGGDKDRESGR. Composition is skewed to basic residues over residues 1207–1220 and 1228–1240; these read GPGH…RRKS and NHHR…RSHS. A compositionally biased stretch (basic and acidic residues) spans 1269-1284; it reads ETAHKSPRQQRERERE.

It belongs to the prickle / espinas / testin family. Interacts with dsh; PET and LIM domains interact with dsh DEP domain, in wing cells. Interacts with Vang in photoreceptor cells.

It is found in the cell membrane. In terms of biological role, acts in a planar cell polarity (PCP) complex; polarization along the apical/basal axis of epithelial cells. PCP signaling in the wing disk requires the receptor fz and the cytoplasmic proteins dsh and pk. These act in a feedback loop leading to activation of the jnk cascade and subsequent polarized arrangement of hairs and bristles. Dgo and pk compete with one another for dsh binding, thereby modulating fz dsh activity and ensuring tight control over fz PCP signaling. Vang, stan and pk function together to regulate the establishment of tissue polarity in the adult eye. The protein is Protein prickle of Drosophila pseudoobscura pseudoobscura (Fruit fly).